The sequence spans 474 residues: 3-isopropylmalate dehydratase large subunit (474 aa).

Positions 355, 415, and 418 each coordinate [4Fe-4S] cluster.

Belongs to the aconitase/IPM isomerase family. LeuC type 1 subfamily. In terms of assembly, heterodimer of LeuC and LeuD. It depends on [4Fe-4S] cluster as a cofactor.

The catalysed reaction is (2R,3S)-3-isopropylmalate = (2S)-2-isopropylmalate. It functions in the pathway amino-acid biosynthesis; L-leucine biosynthesis; L-leucine from 3-methyl-2-oxobutanoate: step 2/4. Its function is as follows. Catalyzes the isomerization between 2-isopropylmalate and 3-isopropylmalate, via the formation of 2-isopropylmaleate. The polypeptide is 3-isopropylmalate dehydratase large subunit (Shewanella sp. (strain MR-7)).